The sequence spans 441 residues: Glutamyl-tRNA reductase (441 aa).

Residues 49–52 (TCNR), Ser-109, 114–116 (EDQ), and Gln-120 each bind substrate. Catalysis depends on Cys-50, which acts as the Nucleophile. Residue 190 to 195 (GAGKMS) participates in NADP(+) binding.

Belongs to the glutamyl-tRNA reductase family. Homodimer.

The catalysed reaction is (S)-4-amino-5-oxopentanoate + tRNA(Glu) + NADP(+) = L-glutamyl-tRNA(Glu) + NADPH + H(+). It functions in the pathway porphyrin-containing compound metabolism; protoporphyrin-IX biosynthesis; 5-aminolevulinate from L-glutamyl-tRNA(Glu): step 1/2. Functionally, catalyzes the NADPH-dependent reduction of glutamyl-tRNA(Glu) to glutamate 1-semialdehyde (GSA). The sequence is that of Glutamyl-tRNA reductase from Moorella thermoacetica (strain ATCC 39073 / JCM 9320).